The primary structure comprises 132 residues: Large ribosomal subunit protein bL21 (132 aa).

The tract at residues 104-132 (GKAPSIGPRPPREKKPVVETSAEADDAAA) is disordered.

This sequence belongs to the bacterial ribosomal protein bL21 family. In terms of assembly, part of the 50S ribosomal subunit. Contacts protein L20.

In terms of biological role, this protein binds to 23S rRNA in the presence of protein L20. This Rhodopseudomonas palustris (strain BisB18) protein is Large ribosomal subunit protein bL21.